A 224-amino-acid chain; its full sequence is UPF0758 protein PST_0473 (224 aa).

Residues 102–224 (ALESPQAVRD…PLSMAEYGWM (123 aa)) enclose the MPN domain. 3 residues coordinate Zn(2+): H173, H175, and D186. Positions 173–186 (HNHPSGVAEPSQAD) match the JAMM motif motif.

This sequence belongs to the UPF0758 family.

This chain is UPF0758 protein PST_0473, found in Stutzerimonas stutzeri (strain A1501) (Pseudomonas stutzeri).